The chain runs to 104 residues: DNA-directed RNA polymerase subunit omega (104 aa).

The interval valine 60–isoleucine 104 is disordered. Residues proline 63–isoleucine 104 are compositionally biased toward basic and acidic residues.

It belongs to the RNA polymerase subunit omega family. As to quaternary structure, the RNAP catalytic core consists of 2 alpha, 1 beta, 1 beta' and 1 omega subunit. When a sigma factor is associated with the core the holoenzyme is formed, which can initiate transcription.

The catalysed reaction is RNA(n) + a ribonucleoside 5'-triphosphate = RNA(n+1) + diphosphate. Functionally, promotes RNA polymerase assembly. Latches the N- and C-terminal regions of the beta' subunit thereby facilitating its interaction with the beta and alpha subunits. The polypeptide is DNA-directed RNA polymerase subunit omega (Streptococcus sanguinis (strain SK36)).